The primary structure comprises 90 residues: MAFFGKRKEKRKFTQQNPLFKRRKFCRFTAAGVEEIDYKDLDTLRDFVQENGKIIPARLTGTKAHYQRQLDTAIKRARFLALLPYTDNHN.

It belongs to the bacterial ribosomal protein bS18 family. Part of the 30S ribosomal subunit. Forms a tight heterodimer with protein bS6.

Its function is as follows. Binds as a heterodimer with protein bS6 to the central domain of the 16S rRNA, where it helps stabilize the platform of the 30S subunit. This chain is Small ribosomal subunit protein bS18, found in Bordetella petrii (strain ATCC BAA-461 / DSM 12804 / CCUG 43448).